The chain runs to 400 residues: Protein transport protein HofC homolog (400 aa).

The next 3 membrane-spanning stretches (helical) occupy residues 165-185 (YPIIILAMAIMVVVAMLHFVL), 209-229 (LADFSGEWSWLLVLFGFLLAI), and 370-390 (LLIITGGIIGTLVVAMYLPIF).

Belongs to the GSP F family.

The protein resides in the cell inner membrane. The chain is Protein transport protein HofC homolog (hofC) from Escherichia coli (strain K12).